The chain runs to 150 residues: UPF0756 membrane protein HDEF_0364 (150 aa).

Helical transmembrane passes span 1-21 (MMFF…GLIS), 28-48 (ISVV…FPWV), 51-71 (YALK…IASG), 88-108 (ILGI…VSLM), and 123-143 (ILGV…AGLL).

This sequence belongs to the UPF0756 family.

The protein localises to the cell membrane. This Hamiltonella defensa subsp. Acyrthosiphon pisum (strain 5AT) protein is UPF0756 membrane protein HDEF_0364.